We begin with the raw amino-acid sequence, 176 residues long: RNA polymerase sigma factor SigO (176 aa).

A Polymerase core binding motif is present at residues 30–43; that stretch reads DARSLDELFKQFYK. The segment at residues 139 to 158 is a DNA-binding region (H-T-H motif); sequence MQEIADSLGESRQNISNIHK.

Belongs to the sigma-70 factor family. Interacts with RNA polymerase.

Sigma factors are initiation factors that promote the attachment of RNA polymerase to specific initiation sites and are then released. Together with its coactivator RsoA, positively regulates the expression of at least three operons, including oxdC-yvrL, sigO-rsoA and yvrJ. Required for the acid stress-dependent induction of the oxalate decarboxylase oxdC. In Bacillus subtilis (strain 168), this protein is RNA polymerase sigma factor SigO (sigO).